Here is a 409-residue protein sequence, read N- to C-terminus: MSRESLYISACHPYEGSMAENHTHWLRKENTDQTKASFPELFFDLVFVFALIQLSESLSDDFSLGIAAEAVLFIFALWWVWIHTTWVMDLLDTEIEPVRLLLFTLMFFGIVMAIALPEAFKGMGLLFAVAYSAMQVSRSLFALYAFRRGDPASFMTFFRITAWLTISSTFWITGGLSEPHLRVVLWIVALVVEYTGPTVRYWVPLIGASPRETLDIDGEHLAERSALFVIIALGETILTIGKHTFSNLETEGTPWVLCFSFLTTVLMWWIYFHDGQQRAADKAEDTSKPQTTAQYLFTYGHLPIVGGIIFTAVGEDFSLAHPYQLGTYNFALAQLGGPILFLAGTMWMKRVSSRVLPYSHVFGISLLTASFTLVPFVANFAIQALTGVILLVVAVWEYVALKHLRRSAA.

10 consecutive transmembrane segments (helical) span residues 62–82, 100–120, 123–143, 152–172, 183–203, 252–272, 293–313, 328–348, 355–375, and 376–396; these read FSLGIAAEAVLFIFALWWVWI, LLLFTLMFFGIVMAIALPEAF, MGLLFAVAYSAMQVSRSLFAL, ASFMTFFRITAWLTISSTFWI, VVLWIVALVVEYTGPTVRYWV, GTPWVLCFSFLTTVLMWWIYF, AQYLFTYGHLPIVGGIIFTAV, YNFALAQLGGPILFLAGTMWM, VLPYSHVFGISLLTASFTLVP, and FVANFAIQALTGVILLVVAVW.

It localises to the cell membrane. This is an uncharacterized protein from Rhizobium meliloti (strain 1021) (Ensifer meliloti).